The following is a 129-amino-acid chain: Large ribosomal subunit protein uL22 (129 aa).

It belongs to the universal ribosomal protein uL22 family. In terms of assembly, part of the 50S ribosomal subunit.

Its function is as follows. This protein binds specifically to 23S rRNA; its binding is stimulated by other ribosomal proteins, e.g. L4, L17, and L20. It is important during the early stages of 50S assembly. It makes multiple contacts with different domains of the 23S rRNA in the assembled 50S subunit and ribosome. In terms of biological role, the globular domain of the protein is located near the polypeptide exit tunnel on the outside of the subunit, while an extended beta-hairpin is found that lines the wall of the exit tunnel in the center of the 70S ribosome. The polypeptide is Large ribosomal subunit protein uL22 (Phytoplasma sp. (strain STRAWB2)).